We begin with the raw amino-acid sequence, 228 residues long: PKHD-type hydroxylase XCV3086 (228 aa).

In terms of domain architecture, Fe2OG dioxygenase spans arginine 78–serine 180. Fe cation-binding residues include histidine 96, aspartate 98, and histidine 161. Arginine 171 is a binding site for 2-oxoglutarate.

Fe(2+) serves as cofactor. L-ascorbate is required as a cofactor.

In Xanthomonas euvesicatoria pv. vesicatoria (strain 85-10) (Xanthomonas campestris pv. vesicatoria), this protein is PKHD-type hydroxylase XCV3086.